The primary structure comprises 206 residues: MKAEVIKLDASPAGSIELDDAIFGLEPRADILHRVVRWQRAKAQAGTHSVLGKSDVSYSTKKIYRQKGTGGARHGSKKAPIFRHGGVYKGPTPRSHAHDLNKKFRALGLKHALSSKATTGNLIVLEDIALAEGKTAMLAKAVKELGWKRVLVIDGADINENFAKAARNLEGVDVLPSIGANVYDILKRDTLVITKAGVEALEARLK.

Belongs to the universal ribosomal protein uL4 family. Part of the 50S ribosomal subunit.

One of the primary rRNA binding proteins, this protein initially binds near the 5'-end of the 23S rRNA. It is important during the early stages of 50S assembly. It makes multiple contacts with different domains of the 23S rRNA in the assembled 50S subunit and ribosome. Its function is as follows. Forms part of the polypeptide exit tunnel. This Cereibacter sphaeroides (strain KD131 / KCTC 12085) (Rhodobacter sphaeroides) protein is Large ribosomal subunit protein uL4.